Here is a 132-residue protein sequence, read N- to C-terminus: Salivary cystatin-L2 (132 aa).

The N-terminal stretch at methionine 1–alanine 18 is a signal peptide. Positions glutamate 28 to asparagine 117 constitute a Cystatin domain. The tract at residues threonine 87–alanine 131 is required for interaction with mouse ANXA2. 2 disulfides stabilise this stretch: cysteine 88–cysteine 99 and cysteine 110–cysteine 129.

The protein belongs to the cystatin family. As to quaternary structure, monomer. Interacts (via loop 2) with mouse ANXA2; the interaction results in reduced activation of mouse NLRC4 inflammasome formation upon Anaplasma phagocytophilum infection. As to expression, detected in salivary gland and midgut.

The protein resides in the secreted. In terms of biological role, contributes to the suppression of the host's immune response to tick salivary proteins and is important for successful feeding on hosts. Inhibitor of cysteine proteinases. Inhibits host immune responses, probably via its inhibition of host cathepsins. Inhibits host papain (in vitro). Inhibits host cathepsin L (CTSL) (in vitro). Inhibits host cathepsin L2 (CTSV) (in vitro). Attenuates IFN-beta (IFNB1)-triggered JAK/STAT signaling pathway in mouse dendritic cells. Suppresses induction of interferon-stimulated gene IRF7 and production of CXCL10 in lipopolysaccharide (LPS)-activated dendritic cells. (Microbial infection) Down-regulates TLR2-mediated host responses to infection by Borrelia burgdorferi and the production of chemokines CCL3 and CXCL10 by host dendritic cells. Enhances infection by the tick-transmitted pathogen B.burgdorferi (in vitro). Functionally, (Microbial infection) Inhibits host inflammatory responses to Anaplasma phagocytophilum infection. Interacts with mouse ANXA2 and suppresses oligomerization of NLRC4, a key component of host inflammasomes that sense A.phagocytophilum infection. Indirectly targets caspase-1 (CASP1) activation and subsequent IL-1beta (IL1B) and IL18 release by inhibiting reactive oxygen species (ROS) production from NADPH oxidase complex in A.phagocytophilum-infected mouse macrophages. Its function is as follows. (Microbial infection) Promotes replication of tick-borne encephalitis virus in mouse dendritic cells and reduces anti-viral effect of host IFN-beta (IFNB1). The protein is Salivary cystatin-L2 of Ixodes scapularis (Black-legged tick).